Reading from the N-terminus, the 431-residue chain is Histidine--tRNA ligase (431 aa).

It belongs to the class-II aminoacyl-tRNA synthetase family. Homodimer.

It localises to the cytoplasm. It carries out the reaction tRNA(His) + L-histidine + ATP = L-histidyl-tRNA(His) + AMP + diphosphate + H(+). This Ligilactobacillus salivarius (strain UCC118) (Lactobacillus salivarius) protein is Histidine--tRNA ligase.